A 340-amino-acid chain; its full sequence is Phosphoribosylformylglycinamidine cyclo-ligase (340 aa).

Belongs to the AIR synthase family.

Its subcellular location is the cytoplasm. The catalysed reaction is 2-formamido-N(1)-(5-O-phospho-beta-D-ribosyl)acetamidine + ATP = 5-amino-1-(5-phospho-beta-D-ribosyl)imidazole + ADP + phosphate + H(+). It participates in purine metabolism; IMP biosynthesis via de novo pathway; 5-amino-1-(5-phospho-D-ribosyl)imidazole from N(2)-formyl-N(1)-(5-phospho-D-ribosyl)glycinamide: step 2/2. The protein is Phosphoribosylformylglycinamidine cyclo-ligase of Streptococcus pneumoniae serotype 2 (strain D39 / NCTC 7466).